The chain runs to 235 residues: Venom metalloproteinase antarease-like TserMP_B (235 aa).

A Peptidase M12B domain is found at Ile-4 to Cys-233. Cysteines 137 and 228 form a disulfide. His-161 provides a ligand contact to Zn(2+). Glu-162 is an active-site residue. Zn(2+)-binding residues include His-165 and His-171.

The protein belongs to the venom metalloproteinase (M12B) family. Zn(2+) is required as a cofactor. Expressed by the venom gland.

Its subcellular location is the secreted. Inhibited by EDTA. Acts as a metalloprotease. Penetrates intact tissue and specifically cleaves the vesicle-associated membrane protein 2 (VAMP2) (part of the SNARE complex) involved in pancreatic secretion, thus disrupting the normal vesicular traffic. The sequence is that of Venom metalloproteinase antarease-like TserMP_B from Tityus serrulatus (Brazilian scorpion).